Here is a 95-residue protein sequence, read N- to C-terminus: UPF0381 protein HI_0400 (95 aa).

Belongs to the UPF0381 family.

In Haemophilus influenzae (strain ATCC 51907 / DSM 11121 / KW20 / Rd), this protein is UPF0381 protein HI_0400.